Reading from the N-terminus, the 812-residue chain is 1,4-alpha-glucan branching enzyme GlgB (812 aa).

Residues 1–11 (MNNGDVNNGTA) show a composition bias toward polar residues. The interval 1-83 (MNNGDVNNGT…SALPADPPAV (83 aa)) is disordered. The span at 49 to 64 (SSASAQPGQTADDPAV) shows a compositional bias: low complexity. Positions 65–83 (PSAPPSAPPSALPADPPAV) are enriched in pro residues. Asp-490 serves as the catalytic Nucleophile. Glu-543 serves as the catalytic Proton donor.

Belongs to the glycosyl hydrolase 13 family. GlgB subfamily. As to quaternary structure, monomer.

It catalyses the reaction Transfers a segment of a (1-&gt;4)-alpha-D-glucan chain to a primary hydroxy group in a similar glucan chain.. It functions in the pathway glycan biosynthesis; glycogen biosynthesis. Catalyzes the formation of the alpha-1,6-glucosidic linkages in glycogen by scission of a 1,4-alpha-linked oligosaccharide from growing alpha-1,4-glucan chains and the subsequent attachment of the oligosaccharide to the alpha-1,6 position. The protein is 1,4-alpha-glucan branching enzyme GlgB of Frankia casuarinae (strain DSM 45818 / CECT 9043 / HFP020203 / CcI3).